We begin with the raw amino-acid sequence, 54 residues long: Large ribosomal subunit protein bL33B (54 aa).

It belongs to the bacterial ribosomal protein bL33 family.

The sequence is that of Large ribosomal subunit protein bL33B from Myxococcus xanthus (strain DK1622).